Here is a 114-residue protein sequence, read N- to C-terminus: UPF0757 protein YmgG (114 aa).

Belongs to the UPF0757 family.

This Escherichia fergusonii (strain ATCC 35469 / DSM 13698 / CCUG 18766 / IAM 14443 / JCM 21226 / LMG 7866 / NBRC 102419 / NCTC 12128 / CDC 0568-73) protein is UPF0757 protein YmgG.